An 89-amino-acid chain; its full sequence is Elongation factor 1-beta (89 aa).

The protein belongs to the EF-1-beta/EF-1-delta family.

In terms of biological role, promotes the exchange of GDP for GTP in EF-1-alpha/GDP, thus allowing the regeneration of EF-1-alpha/GTP that could then be used to form the ternary complex EF-1-alpha/GTP/AAtRNA. This chain is Elongation factor 1-beta, found in Methanococcus aeolicus (strain ATCC BAA-1280 / DSM 17508 / OCM 812 / Nankai-3).